Reading from the N-terminus, the 38-residue chain is U-theraphotoxin-Aju1a (38 aa).

3 disulfides stabilise this stretch: C3–C24, C7–C30, and C16–C35.

Expressed by the venom gland.

It is found in the secreted. Its function is as follows. Has strong antifungal activity against C.albicans MDM8, C.krusei IOC 4559 (MIC=2.5-5 uM), C.glabrata IOC 45658 (MIC=2.5-5 uM), C.albicans IOC 45588 (MIC=2.5-5 uM), C.parapsilosis IOC 456416 (MIC=2.5-5 uM), C.tropicalis IOC 45608 (MIC=2.5-5 uM), C.guilliermondii IOC 455716 (MIC=2.5-5 uM) and A.niger (MIC=5-10 uM). Lacks antifungal activity against B.bassiana. Has no antibacterial effect against Gram-positive bacteria M.luteus, S.epidermidis, S.aureus or against Gram-negative bacteria E.coli and P.aeruginosa. Has no hemolytic activity against human erythrocytes. Probable ion channel inhibitor. The polypeptide is U-theraphotoxin-Aju1a (Avicularia juruensis (Yellow-banded pinktoe)).